We begin with the raw amino-acid sequence, 339 residues long: Ketol-acid reductoisomerase (NADP(+)) (339 aa).

Residues 1–182 (MRVYYDRDAD…GGGRSGIIET (182 aa)) enclose the KARI N-terminal Rossmann domain. NADP(+) is bound by residues 24–27 (YGSQ), lysine 48, serine 51, threonine 53, and 83–86 (DELQ). Histidine 108 is a catalytic residue. Glycine 134 is a binding site for NADP(+). Residues 183-328 (NFKEECETDL…AKLRGMMPWI (146 aa)) enclose the KARI C-terminal knotted domain. Residues aspartate 191, glutamate 195, glutamate 227, and glutamate 231 each coordinate Mg(2+). Serine 252 contacts substrate.

It belongs to the ketol-acid reductoisomerase family. Requires Mg(2+) as cofactor.

It carries out the reaction (2R)-2,3-dihydroxy-3-methylbutanoate + NADP(+) = (2S)-2-acetolactate + NADPH + H(+). The catalysed reaction is (2R,3R)-2,3-dihydroxy-3-methylpentanoate + NADP(+) = (S)-2-ethyl-2-hydroxy-3-oxobutanoate + NADPH + H(+). Its pathway is amino-acid biosynthesis; L-isoleucine biosynthesis; L-isoleucine from 2-oxobutanoate: step 2/4. It functions in the pathway amino-acid biosynthesis; L-valine biosynthesis; L-valine from pyruvate: step 2/4. Involved in the biosynthesis of branched-chain amino acids (BCAA). Catalyzes an alkyl-migration followed by a ketol-acid reduction of (S)-2-acetolactate (S2AL) to yield (R)-2,3-dihydroxy-isovalerate. In the isomerase reaction, S2AL is rearranged via a Mg-dependent methyl migration to produce 3-hydroxy-3-methyl-2-ketobutyrate (HMKB). In the reductase reaction, this 2-ketoacid undergoes a metal-dependent reduction by NADPH to yield (R)-2,3-dihydroxy-isovalerate. The protein is Ketol-acid reductoisomerase (NADP(+)) of Sinorhizobium medicae (strain WSM419) (Ensifer medicae).